Here is a 338-residue protein sequence, read N- to C-terminus: Taste receptor type 2 member 39 (338 aa).

Residues 1 to 30 (MLGRCFPPDTKEKQQLRMTKLCDPAESELS) are Extracellular-facing. Residues 31–51 (PFLITLILAVLLAEYLIGIIA) traverse the membrane as a helical segment. Over 52 to 74 (NGFIMAIHAAEWVQNKAVSTSGR) the chain is Cytoplasmic. A helical membrane pass occupies residues 75-95 (ILVFLSVSRIALQSLMMLEIT). At 96–116 (ISSTSLSFYSEDAVYYAFKIS) the chain is on the extracellular side. A helical transmembrane segment spans residues 117 to 137 (FIFLNFCSLWFAAWLSFFYFV). The Cytoplasmic portion of the chain corresponds to 138-156 (KIANFSYPLFLKLRWRITG). The helical transmembrane segment at 157–177 (LIPWLLWLSVFISFSHSMFCI) threads the bilayer. Over 178–205 (NICTVYCNNSFPIHSSNSTKKTYLSEIN) the chain is Extracellular. Asn185 and Asn194 each carry an N-linked (GlcNAc...) asparagine glycan. The helical transmembrane segment at 206–226 (VVGLAFFFNLGIVTPLIMFIL) threads the bilayer. Residues 227–262 (TATLLILSLKRHTLHMGSNATGSNDPSMEAHMGAIK) lie on the Cytoplasmic side of the membrane. A helical membrane pass occupies residues 263–283 (AISYFLILYIFNAVALFIYLS). At 284–291 (NMFDINSL) the chain is on the extracellular side. A helical transmembrane segment spans residues 292 to 312 (WNNLCQIIMAAYPASHSILLI). At 313-338 (QDNPGLRRAWKRLQLRLHLYPKEWTL) the chain is on the cytoplasmic side.

It belongs to the G-protein coupled receptor T2R family. As to expression, expressed in subsets of taste receptor cells of the tongue and exclusively in gustducin-positive cells.

The protein localises to the membrane. Functionally, receptor that may play a role in the perception of bitterness and is gustducin-linked. May play a role in sensing the chemical composition of the gastrointestinal content. The activity of this receptor may stimulate alpha gustducin, mediate PLC-beta-2 activation and lead to the gating of TRPM5. The chain is Taste receptor type 2 member 39 (TAS2R39) from Homo sapiens (Human).